The primary structure comprises 239 residues: Geranylgeranylglyceryl phosphate synthase (239 aa).

Position 13 (Lys13) interacts with sn-glycerol 1-phosphate. Mg(2+) contacts are provided by Asp15 and Thr42. Sn-glycerol 1-phosphate-binding positions include 162 to 167 (YIEYSG), Gly192, and 212 to 213 (GD).

It belongs to the GGGP/HepGP synthase family. Group I subfamily. Mg(2+) is required as a cofactor.

It is found in the cytoplasm. The enzyme catalyses sn-glycerol 1-phosphate + (2E,6E,10E)-geranylgeranyl diphosphate = sn-3-O-(geranylgeranyl)glycerol 1-phosphate + diphosphate. Its pathway is membrane lipid metabolism; glycerophospholipid metabolism. In terms of biological role, prenyltransferase that catalyzes the transfer of the geranylgeranyl moiety of geranylgeranyl diphosphate (GGPP) to the C3 hydroxyl of sn-glycerol-1-phosphate (G1P). This reaction is the first ether-bond-formation step in the biosynthesis of archaeal membrane lipids. The chain is Geranylgeranylglyceryl phosphate synthase from Haloquadratum walsbyi (strain DSM 16790 / HBSQ001).